A 159-amino-acid polypeptide reads, in one-letter code: bZIP transcription factor 11 (159 aa).

A compositionally biased stretch (low complexity) spans 1–21; that stretch reads MESSSSGTTSSTIQTSSGSEE. The segment at 1–47 is disordered; that stretch reads MESSSSGTTSSTIQTSSGSEESLMEQRKRKRMLSNRESARRSRMKKQ. The 64-residue stretch at 25 to 88 folds into the bZIP domain; the sequence is EQRKRKRMLS…LTVEAENSVL (64 aa). The tract at residues 27 to 48 is basic motif; sequence RKRKRMLSNRESARRSRMKKQK. The interval 53 to 67 is leucine-zipper; the sequence is LTAQVNHLKKENTEI.

Forms heterodimers with BZIP1, BZIP9, BZIP10, BZIP25 and BZIP63. Interacts with ADA2B. In terms of tissue distribution, highly expressed in stems and flowers. Expressed in root tips, cotyledons, leaf vasculature, embryos, apical parts of siliques and funiculi.

It localises to the nucleus. Functionally, transcription factor that binds to the DNA sequence 5'-ACTCAT-3' in target gene promoters. Promotes POX1/PRODH1 expression in response to hypoosmolarity stress. Positively regulates the expression of ASN1 and POX2/PRODH2 genes, which are involved in amino acid metabolism. Regulates several metabolic pathways such as myo-inositol, raffinose and trehalose. Regulates several trehalose metabolism genes, including TRE1, TPP5 and TPP6. Mediates recruitment of the histone acetylation machinery to activate auxin-induced transcription. Interacts with ADA2B adapter protein to promote ADA2B-mediated recruitment of SAGA-like histone acetyltransferase complexes to specific auxin-responsive genes. This chain is bZIP transcription factor 11, found in Arabidopsis thaliana (Mouse-ear cress).